Reading from the N-terminus, the 303-residue chain is Probable 5-dehydro-4-deoxyglucarate dehydratase (303 aa).

This sequence belongs to the DapA family.

It carries out the reaction 5-dehydro-4-deoxy-D-glucarate + H(+) = 2,5-dioxopentanoate + CO2 + H2O. It functions in the pathway carbohydrate acid metabolism; D-glucarate degradation; 2,5-dioxopentanoate from D-glucarate: step 2/2. The protein is Probable 5-dehydro-4-deoxyglucarate dehydratase of Ectopseudomonas mendocina (strain ymp) (Pseudomonas mendocina).